Reading from the N-terminus, the 413-residue chain is Arginine biosynthesis bifunctional protein ArgJ (413 aa).

The substrate site is built by threonine 163, lysine 189, threonine 200, glutamate 286, asparagine 408, and threonine 413. Threonine 200 functions as the Nucleophile in the catalytic mechanism.

It belongs to the ArgJ family. As to quaternary structure, heterotetramer of two alpha and two beta chains.

It localises to the cytoplasm. The enzyme catalyses N(2)-acetyl-L-ornithine + L-glutamate = N-acetyl-L-glutamate + L-ornithine. It catalyses the reaction L-glutamate + acetyl-CoA = N-acetyl-L-glutamate + CoA + H(+). It functions in the pathway amino-acid biosynthesis; L-arginine biosynthesis; L-ornithine and N-acetyl-L-glutamate from L-glutamate and N(2)-acetyl-L-ornithine (cyclic): step 1/1. Its pathway is amino-acid biosynthesis; L-arginine biosynthesis; N(2)-acetyl-L-ornithine from L-glutamate: step 1/4. In terms of biological role, catalyzes two activities which are involved in the cyclic version of arginine biosynthesis: the synthesis of N-acetylglutamate from glutamate and acetyl-CoA as the acetyl donor, and of ornithine by transacetylation between N(2)-acetylornithine and glutamate. In Staphylococcus aureus (strain COL), this protein is Arginine biosynthesis bifunctional protein ArgJ.